Here is a 150-residue protein sequence, read N- to C-terminus: 3-hydroxyacyl-[acyl-carrier-protein] dehydratase FabZ (150 aa).

Residue His-57 is part of the active site.

It belongs to the thioester dehydratase family. FabZ subfamily.

The protein localises to the cytoplasm. The catalysed reaction is a (3R)-hydroxyacyl-[ACP] = a (2E)-enoyl-[ACP] + H2O. Functionally, involved in unsaturated fatty acids biosynthesis. Catalyzes the dehydration of short chain beta-hydroxyacyl-ACPs and long chain saturated and unsaturated beta-hydroxyacyl-ACPs. The chain is 3-hydroxyacyl-[acyl-carrier-protein] dehydratase FabZ from Actinobacillus succinogenes (strain ATCC 55618 / DSM 22257 / CCUG 43843 / 130Z).